The following is a 716-amino-acid chain: Amino-acid acetyltransferase, mitochondrial (716 aa).

The N-terminal 44 residues, 1 to 44 (MSLHTGWPRTVNSSFLKKHRSSLCTCQHTSSVLPRSFSTTPDRH), are a transit peptide targeting the mitochondrion. Residues 37-56 (FSTTPDRHVQQSADFSSTSR) show a composition bias toward polar residues. 2 disordered regions span residues 37-58 (FSTTPDRHVQQSADFSSTSRSY) and 96-121 (KAQHPKSPDANKPEPEKSATAPTLPS). Over residues 101–112 (KSPDANKPEPEK) the composition is skewed to basic and acidic residues. Positions 537–706 (SRPRLKLDDP…YEAVCRSIQP (170 aa)) constitute an N-acetyltransferase domain.

Belongs to the acetyltransferase family.

The protein localises to the mitochondrion. The catalysed reaction is L-glutamate + acetyl-CoA = N-acetyl-L-glutamate + CoA + H(+). It participates in amino-acid biosynthesis; L-arginine biosynthesis; N(2)-acetyl-L-ornithine from L-glutamate: step 1/4. Functionally, N-acetylglutamate synthase involved in arginine biosynthesis. The sequence is that of Amino-acid acetyltransferase, mitochondrial (arg2) from Aspergillus fumigatus (strain CBS 144.89 / FGSC A1163 / CEA10) (Neosartorya fumigata).